The primary structure comprises 388 residues: Succinate--CoA ligase [ADP-forming] subunit beta (388 aa).

One can recognise an ATP-grasp domain in the interval 9–244; it reads KEILRKFGVA…LDEEDPAEIE (236 aa). ATP contacts are provided by residues K46, 53 to 55, E99, A102, and E107; that span reads GRG. N199 and D213 together coordinate Mg(2+). Substrate-binding positions include N264 and 321-323; that span reads GIM.

The protein belongs to the succinate/malate CoA ligase beta subunit family. As to quaternary structure, heterotetramer of two alpha and two beta subunits. Mg(2+) serves as cofactor.

The enzyme catalyses succinate + ATP + CoA = succinyl-CoA + ADP + phosphate. It carries out the reaction GTP + succinate + CoA = succinyl-CoA + GDP + phosphate. The protein operates within carbohydrate metabolism; tricarboxylic acid cycle; succinate from succinyl-CoA (ligase route): step 1/1. Its function is as follows. Succinyl-CoA synthetase functions in the citric acid cycle (TCA), coupling the hydrolysis of succinyl-CoA to the synthesis of either ATP or GTP and thus represents the only step of substrate-level phosphorylation in the TCA. The beta subunit provides nucleotide specificity of the enzyme and binds the substrate succinate, while the binding sites for coenzyme A and phosphate are found in the alpha subunit. This chain is Succinate--CoA ligase [ADP-forming] subunit beta, found in Burkholderia cenocepacia (strain ATCC BAA-245 / DSM 16553 / LMG 16656 / NCTC 13227 / J2315 / CF5610) (Burkholderia cepacia (strain J2315)).